A 159-amino-acid chain; its full sequence is Small ribosomal subunit protein uS7 (159 aa).

Belongs to the universal ribosomal protein uS7 family. As to quaternary structure, part of the 30S ribosomal subunit. Contacts proteins S9 and S11.

Functionally, one of the primary rRNA binding proteins, it binds directly to 16S rRNA where it nucleates assembly of the head domain of the 30S subunit. Is located at the subunit interface close to the decoding center, probably blocks exit of the E-site tRNA. In Wolbachia pipientis wMel, this protein is Small ribosomal subunit protein uS7.